Reading from the N-terminus, the 157-residue chain is Transcriptional regulator AzlB (157 aa).

Residues 5-66 (LDETDKAILR…IVDEKKLGIE (62 aa)) form the HTH asnC-type domain. Positions 24–43 (NLNLSKKIGLSPSACLARTK) form a DNA-binding region, H-T-H motif.

Transcriptional repressor of the azlBCD operon involved in branched-chain amino acid transport. This Bacillus subtilis (strain 168) protein is Transcriptional regulator AzlB (azlB).